A 194-amino-acid chain; its full sequence is Large ribosomal subunit protein uL6x (194 aa).

Position 75 is a phosphothreonine (T75).

Belongs to the universal ribosomal protein uL6 family.

The chain is Large ribosomal subunit protein uL6x (RPL9D) from Arabidopsis thaliana (Mouse-ear cress).